A 577-amino-acid polypeptide reads, in one-letter code: Pentatricopeptide repeat-containing protein At2g01390 (577 aa).

10 PPR repeats span residues 121–155, 156–190, 191–225, 226–260, 261–295, 382–416, 417–451, 452–482, 485–519, and 520–554; these read DHFT…GVLI, DTVT…GCEP, TVVS…RVSP, NCHT…GVQP, DKAA…GVVL, DSFV…GIHL, KKSA…QHSL, GCYQ…LPDD, GVAA…EIMP, and SLGT…LVAS.

It belongs to the PPR family. P subfamily.

The protein is Pentatricopeptide repeat-containing protein At2g01390 of Arabidopsis thaliana (Mouse-ear cress).